Reading from the N-terminus, the 162-residue chain is Nitrogen regulatory protein (162 aa).

One can recognise a PTS EIIA type-2 domain in the interval 12-156 (NVLNQECTRS…EELYEIITEA (145 aa)). The active-site Tele-phosphohistidine intermediate is the histidine 73.

Its subcellular location is the cytoplasm. Its function is as follows. Seems to have a role in regulating nitrogen assimilation. The polypeptide is Nitrogen regulatory protein (ptsN) (Klebsiella oxytoca).